Here is a 471-residue protein sequence, read N- to C-terminus: Regulator of microtubule dynamics protein 3 (471 aa).

Topologically, residues 1–12 (MSRLGALGGSRA) are mitochondrial intermembrane. A helical membrane pass occupies residues 13 to 35 (GLGLLLGTAAGLGFLCVLYSQRW). The Cytoplasmic portion of the chain corresponds to 36-471 (KRTQRHGRSQ…LEELEVILGK (436 aa)). A phosphoserine mark is found at Ser-44, Ser-46, Ser-50, and Ser-57. Positions 91-125 (LDRLDFVLTSLMALRREVEELQRSLQGLAGEIVGE) form a coiled coil. The FFAT signature appears at 157 to 163 (VYFTASS). Thr-160 bears the Phosphothreonine mark. The interval 168–203 (TDAESEGGYTTANAESDYERDSDKESEDAEDEVSCE) is disordered. 4 positions are modified to phosphoserine: Ser-183, Ser-193, Ser-212, and Ser-233. Over residues 191 to 201 (KESEDAEDEVS) the composition is skewed to acidic residues.

It belongs to the RMDN family. As to quaternary structure, interacts with PTPN2. Interacts with microtubules. Interacts with VAPB. Interacts (via FFAT motif) with MOSPD2 (via MSP domain). Interacts (via phosphorylated FFAT motif) with MOSPD2, VAPA and VAPB. In terms of processing, phosphorylation at Thr-160 of the FFAT motif activates interaction with MOSPD2, VAPA and VAPB.

It localises to the mitochondrion outer membrane. It is found in the cytoplasm. Its subcellular location is the nucleus. The protein localises to the cytoskeleton. The protein resides in the spindle. It localises to the spindle pole. Its function is as follows. Involved in cellular calcium homeostasis regulation. May participate in differentiation and apoptosis of keratinocytes. Overexpression induces apoptosis. This chain is Regulator of microtubule dynamics protein 3, found in Rattus norvegicus (Rat).